The following is a 152-amino-acid chain: Large ribosomal subunit protein uL15 (152 aa).

Positions 1–55 (MRLHELKPNEGATHKKKRVGRGIGSGHGKTSTKGQKGQTSRSGDSKLPARFEGGQ) are disordered. A compositionally biased stretch (polar residues) spans 28-42 (GKTSTKGQKGQTSRS).

Belongs to the universal ribosomal protein uL15 family. Part of the 50S ribosomal subunit.

Binds to the 23S rRNA. This is Large ribosomal subunit protein uL15 from Sulfurihydrogenibium sp. (strain YO3AOP1).